The chain runs to 260 residues: Phosphate import ATP-binding protein PstB (260 aa).

The region spanning 14 to 255 (IETENLSLFY…PKNTKTEEYI (242 aa)) is the ABC transporter domain. ATP is bound at residue 46 to 53 (GPSGCGKS).

This sequence belongs to the ABC transporter superfamily. Phosphate importer (TC 3.A.1.7) family. In terms of assembly, the complex is composed of two ATP-binding proteins (PstB), two transmembrane proteins (PstC and PstA) and a solute-binding protein (PstS).

The protein resides in the cell inner membrane. It catalyses the reaction phosphate(out) + ATP + H2O = ADP + 2 phosphate(in) + H(+). Part of the ABC transporter complex PstSACB involved in phosphate import. Responsible for energy coupling to the transport system. In Borrelia garinii subsp. bavariensis (strain ATCC BAA-2496 / DSM 23469 / PBi) (Borreliella bavariensis), this protein is Phosphate import ATP-binding protein PstB.